Here is a 118-residue protein sequence, read N- to C-terminus: MAKLSRNQARKAKNLKIRTKITGTAERPRLSVFRSHMNFSAQLIDDSKSITIVGITTAKKGSKEYHGNIKSAHELGLKFAKMIKEKNVSKIVFDRSGYLYHGRVKAFAEALRSEGIEF.

Belongs to the universal ribosomal protein uL18 family. In terms of assembly, part of the 50S ribosomal subunit; part of the 5S rRNA/L5/L18/L25 subcomplex. Contacts the 5S and 23S rRNAs.

This is one of the proteins that bind and probably mediate the attachment of the 5S RNA into the large ribosomal subunit, where it forms part of the central protuberance. The sequence is that of Large ribosomal subunit protein uL18 from Mycoplasmopsis pulmonis (strain UAB CTIP) (Mycoplasma pulmonis).